A 482-amino-acid chain; its full sequence is Cilia- and flagella-associated protein 53 (482 aa).

3 coiled-coil regions span residues 9–40 (DARI…AVAE), 67–124 (ADLN…QALA), and 152–413 (IEER…AKDA). A disordered region spans residues 462-482 (VNQTLSSTDPPVWHGRRKFDW).

It belongs to the CFAP53 family.

It localises to the cell projection. It is found in the cilium. The protein localises to the flagellum. Its function is as follows. May play a role in filopodium movement. The chain is Cilia- and flagella-associated protein 53 from Chlamydomonas reinhardtii (Chlamydomonas smithii).